We begin with the raw amino-acid sequence, 118 residues long: Acidic phospholipase A2 homolog (118 aa).

7 disulfides stabilise this stretch: Cys11/Cys70, Cys25/Cys117, Cys27/Cys43, Cys42/Cys98, Cys49/Cys91, Cys59/Cys84, and Cys77/Cys89.

It belongs to the phospholipase A2 family. Group I subfamily. A49 sub-subfamily. As to expression, expressed by the venom gland.

Its subcellular location is the secreted. Snake venom phospholipase A2 (PLA2) homolog that lacks both catalytic and neurotoxicity activities. In Bungarus fasciatus (Banded krait), this protein is Acidic phospholipase A2 homolog.